Consider the following 509-residue polypeptide: 2-isopropylmalate synthase (509 aa).

Residues 5 to 267 (IQIFDTTLRD…QTALNLEETK (263 aa)) form the Pyruvate carboxyltransferase domain. Mn(2+)-binding residues include Asp-14, His-202, His-204, and Asn-238. The tract at residues 391–509 (KLETLQLQYV…AAENVEKVGN (119 aa)) is regulatory domain.

Belongs to the alpha-IPM synthase/homocitrate synthase family. LeuA type 1 subfamily. As to quaternary structure, homodimer. The cofactor is Mn(2+).

It localises to the cytoplasm. It catalyses the reaction 3-methyl-2-oxobutanoate + acetyl-CoA + H2O = (2S)-2-isopropylmalate + CoA + H(+). It participates in amino-acid biosynthesis; L-leucine biosynthesis; L-leucine from 3-methyl-2-oxobutanoate: step 1/4. In terms of biological role, catalyzes the condensation of the acetyl group of acetyl-CoA with 3-methyl-2-oxobutanoate (2-ketoisovalerate) to form 3-carboxy-3-hydroxy-4-methylpentanoate (2-isopropylmalate). This chain is 2-isopropylmalate synthase, found in Staphylococcus aureus (strain MRSA252).